Here is a 200-residue protein sequence, read N- to C-terminus: Protein GrpE (200 aa).

A compositionally biased stretch (polar residues) spans 1–11; it reads MSNQTNKAQDN. The segment at 1–25 is disordered; that stretch reads MSNQTNKAQDNQVEEIVEGELLNEN.

This sequence belongs to the GrpE family. In terms of assembly, homodimer.

The protein localises to the cytoplasm. Participates actively in the response to hyperosmotic and heat shock by preventing the aggregation of stress-denatured proteins, in association with DnaK and GrpE. It is the nucleotide exchange factor for DnaK and may function as a thermosensor. Unfolded proteins bind initially to DnaJ; upon interaction with the DnaJ-bound protein, DnaK hydrolyzes its bound ATP, resulting in the formation of a stable complex. GrpE releases ADP from DnaK; ATP binding to DnaK triggers the release of the substrate protein, thus completing the reaction cycle. Several rounds of ATP-dependent interactions between DnaJ, DnaK and GrpE are required for fully efficient folding. The protein is Protein GrpE of Shewanella pealeana (strain ATCC 700345 / ANG-SQ1).